Reading from the N-terminus, the 221-residue chain is MAASRPLSRFWEWGKNIVCVGRNYADHVREMQSAAPSEPVLFLKPSTAYAPEGSPVLVPAYTRNLHHELELAVVMGKRCRAVSEAAAMDYVAGYALCLDMTARDVQDECKKKGLPWTLAKSFTASCPVSAFVPKEKIPDPHNLKLWLKVNGELRQEGETSSMIFSIPYIISYVSKIMTLEEGDIILTGTPKGVGPVKENDEIQAGIHGVLSMKFKVERPEY.

A mitochondrion-targeting transit peptide spans 1–24; it reads MAASRPLSRFWEWGKNIVCVGRNY. Ser-37 bears the Phosphoserine mark. Mg(2+) is bound by residues Glu-68, Glu-70, and Asp-99. Lys-110 bears the N6-acetyllysine mark. At Lys-112 the chain carries N6-succinyllysine.

The protein belongs to the FAH family. Homodimer. Mg(2+) is required as a cofactor. The cofactor is Mn(2+).

The protein resides in the mitochondrion. It is found in the cytoplasm. The protein localises to the cytosol. It carries out the reaction oxaloacetate = enol-oxaloacetate. The catalysed reaction is oxaloacetate + H(+) = pyruvate + CO2. The enzyme catalyses a 3-acylpyruvate + H2O = a carboxylate + pyruvate + H(+). It catalyses the reaction acetylpyruvate + H2O = acetate + pyruvate + H(+). It carries out the reaction 3-fumarylpyruvate + H2O = fumarate + pyruvate + H(+). With respect to regulation, oxaloacetate decarboxylation is competitively inhibited by oxalate. Functionally, tautomerase that converts enol-oxaloacetate, a strong inhibitor of succinate dehydrogenase, to the physiological keto form of oxaloacetate. It is thereby required to maximize aerobic respiration efficiency by preventing succinate dehydrogenase inhibition. Also acts as a weak oxaloacetate decarboxylase (ODx), catalyzing the decarboxylation of oxaloacetate (OAA) to pyruvate and CO(2), and as such is likely a regulatory enzyme in the TCA cycle. Also displays acylpyruvase activity, being able to hydrolyze acetylpyruvate and fumarylpyruvate in vitro. The sequence is that of Oxaloacetate tautomerase FAHD1, mitochondrial from Bos taurus (Bovine).